Consider the following 175-residue polypeptide: Ribulose bisphosphate carboxylase small subunit, chloroplastic (175 aa).

A chloroplast-targeting transit peptide spans 1-34 (MSFATTNKTIVPCATTKQIVRPRFLSNGTISKSR).

Belongs to the RuBisCO small chain family. In terms of assembly, heterohexadecamer of 8 large and 8 small subunits.

Its subcellular location is the plastid. It localises to the chloroplast. Functionally, ruBisCO catalyzes two reactions: the carboxylation of D-ribulose 1,5-bisphosphate, the primary event in carbon dioxide fixation, as well as the oxidative fragmentation of the pentose substrate. Both reactions occur simultaneously and in competition at the same active site. Although the small subunit is not catalytic it is essential for maximal activity. The chain is Ribulose bisphosphate carboxylase small subunit, chloroplastic from Batophora oerstedii (Green alga).